We begin with the raw amino-acid sequence, 181 residues long: Adenine phosphoribosyltransferase (181 aa).

It belongs to the purine/pyrimidine phosphoribosyltransferase family. As to quaternary structure, homodimer.

The protein localises to the cytoplasm. The enzyme catalyses AMP + diphosphate = 5-phospho-alpha-D-ribose 1-diphosphate + adenine. Its pathway is purine metabolism; AMP biosynthesis via salvage pathway; AMP from adenine: step 1/1. In terms of biological role, catalyzes a salvage reaction resulting in the formation of AMP, that is energically less costly than de novo synthesis. The polypeptide is Adenine phosphoribosyltransferase (Methylobacterium sp. (strain 4-46)).